The chain runs to 428 residues: C4-dicarboxylate transport protein (428 aa).

The next 8 helical transmembrane spans lie at 8–28, 44–64, 76–96, 142–162, 184–206, 222–242, 326–346, and 352–372; these read SLYF…HFYP, LIKM…IAGM, VALL…LIIV, IGAF…LFGF, VIFG…AMAF, LIIC…GSIA, IVHQ…AAGV, and IVLA…LALI.

This sequence belongs to the dicarboxylate/amino acid:cation symporter (DAACS) (TC 2.A.23) family.

The protein localises to the cell inner membrane. Functionally, responsible for the transport of dicarboxylates such as succinate, fumarate, and malate from the periplasm across the membrane. The sequence is that of C4-dicarboxylate transport protein from Shigella flexneri.